Consider the following 169-residue polypeptide: Crossover junction endodeoxyribonuclease RuvC (169 aa).

Residues aspartate 13, glutamate 73, and aspartate 145 contribute to the active site. 3 residues coordinate Mg(2+): aspartate 13, glutamate 73, and aspartate 145.

It belongs to the RuvC family. Homodimer which binds Holliday junction (HJ) DNA. The HJ becomes 2-fold symmetrical on binding to RuvC with unstacked arms; it has a different conformation from HJ DNA in complex with RuvA. In the full resolvosome a probable DNA-RuvA(4)-RuvB(12)-RuvC(2) complex forms which resolves the HJ. Mg(2+) is required as a cofactor.

It is found in the cytoplasm. It catalyses the reaction Endonucleolytic cleavage at a junction such as a reciprocal single-stranded crossover between two homologous DNA duplexes (Holliday junction).. Its function is as follows. The RuvA-RuvB-RuvC complex processes Holliday junction (HJ) DNA during genetic recombination and DNA repair. Endonuclease that resolves HJ intermediates. Cleaves cruciform DNA by making single-stranded nicks across the HJ at symmetrical positions within the homologous arms, yielding a 5'-phosphate and a 3'-hydroxyl group; requires a central core of homology in the junction. The consensus cleavage sequence is 5'-(A/T)TT(C/G)-3'. Cleavage occurs on the 3'-side of the TT dinucleotide at the point of strand exchange. HJ branch migration catalyzed by RuvA-RuvB allows RuvC to scan DNA until it finds its consensus sequence, where it cleaves and resolves the cruciform DNA. The chain is Crossover junction endodeoxyribonuclease RuvC from Solidesulfovibrio magneticus (strain ATCC 700980 / DSM 13731 / RS-1) (Desulfovibrio magneticus).